The following is a 164-amino-acid chain: SsrA-binding protein (164 aa).

This sequence belongs to the SmpB family.

Its subcellular location is the cytoplasm. Required for rescue of stalled ribosomes mediated by trans-translation. Binds to transfer-messenger RNA (tmRNA), required for stable association of tmRNA with ribosomes. tmRNA and SmpB together mimic tRNA shape, replacing the anticodon stem-loop with SmpB. tmRNA is encoded by the ssrA gene; the 2 termini fold to resemble tRNA(Ala) and it encodes a 'tag peptide', a short internal open reading frame. During trans-translation Ala-aminoacylated tmRNA acts like a tRNA, entering the A-site of stalled ribosomes, displacing the stalled mRNA. The ribosome then switches to translate the ORF on the tmRNA; the nascent peptide is terminated with the 'tag peptide' encoded by the tmRNA and targeted for degradation. The ribosome is freed to recommence translation, which seems to be the essential function of trans-translation. This Synechococcus sp. (strain CC9311) protein is SsrA-binding protein.